Consider the following 440-residue polypeptide: Xaa-Pro dipeptidase (440 aa).

The Mn(2+) site is built by Asp-244, Asp-255, His-335, Glu-380, and Glu-419.

Belongs to the peptidase M24B family. Bacterial-type prolidase subfamily. Mn(2+) serves as cofactor.

The enzyme catalyses Xaa-L-Pro dipeptide + H2O = an L-alpha-amino acid + L-proline. In terms of biological role, splits dipeptides with a prolyl residue in the C-terminal position. The sequence is that of Xaa-Pro dipeptidase from Shewanella putrefaciens (strain CN-32 / ATCC BAA-453).